A 128-amino-acid chain; its full sequence is Azurin (128 aa).

Residues 1 to 128 enclose the Plastocyanin-like domain; the sequence is AECKVDVDST…SMMKGAVVLK (128 aa). Cys-3 and Cys-26 are joined by a disulfide. Positions 46, 112, 117, and 121 each coordinate Cu cation.

It localises to the periplasm. Transfers electrons from cytochrome c551 to cytochrome oxidase. The sequence is that of Azurin from Pseudomonas chlororaphis (Pseudomonas aureofaciens).